The sequence spans 274 residues: Ribosomal RNA small subunit methyltransferase A (274 aa).

Residues histidine 15, leucine 17, glycine 42, glutamate 64, aspartate 89, and asparagine 108 each coordinate S-adenosyl-L-methionine.

The protein belongs to the class I-like SAM-binding methyltransferase superfamily. rRNA adenine N(6)-methyltransferase family. RsmA subfamily.

It is found in the cytoplasm. It carries out the reaction adenosine(1518)/adenosine(1519) in 16S rRNA + 4 S-adenosyl-L-methionine = N(6)-dimethyladenosine(1518)/N(6)-dimethyladenosine(1519) in 16S rRNA + 4 S-adenosyl-L-homocysteine + 4 H(+). Its function is as follows. Specifically dimethylates two adjacent adenosines (A1518 and A1519) in the loop of a conserved hairpin near the 3'-end of 16S rRNA in the 30S particle. May play a critical role in biogenesis of 30S subunits. The protein is Ribosomal RNA small subunit methyltransferase A of Prochlorococcus marinus (strain AS9601).